The primary structure comprises 118 residues: Small ribosomal subunit protein uS13 (118 aa).

Positions 94-118 (SLPLRGQRTKTNARTRKGPRKPIKK) are disordered.

The protein belongs to the universal ribosomal protein uS13 family. In terms of assembly, part of the 30S ribosomal subunit. Forms a loose heterodimer with protein S19. Forms two bridges to the 50S subunit in the 70S ribosome.

Located at the top of the head of the 30S subunit, it contacts several helices of the 16S rRNA. In the 70S ribosome it contacts the 23S rRNA (bridge B1a) and protein L5 of the 50S subunit (bridge B1b), connecting the 2 subunits; these bridges are implicated in subunit movement. Contacts the tRNAs in the A and P-sites. This chain is Small ribosomal subunit protein uS13, found in Vibrio vulnificus (strain CMCP6).